The primary structure comprises 255 residues: Geranylgeranylglyceryl phosphate synthase (255 aa).

D26 and S55 together coordinate Mg(2+). Sn-glycerol 1-phosphate contacts are provided by residues 174-180 (YLEAGSG), 205-206 (GG), and 227-228 (GT).

Belongs to the GGGP/HepGP synthase family. Group II subfamily. Mg(2+) serves as cofactor.

The protein resides in the cytoplasm. The enzyme catalyses sn-glycerol 1-phosphate + (2E,6E,10E)-geranylgeranyl diphosphate = sn-3-O-(geranylgeranyl)glycerol 1-phosphate + diphosphate. It functions in the pathway membrane lipid metabolism; glycerophospholipid metabolism. Functionally, prenyltransferase that catalyzes the transfer of the geranylgeranyl moiety of geranylgeranyl diphosphate (GGPP) to the C3 hydroxyl of sn-glycerol-1-phosphate (G1P). This reaction is the first ether-bond-formation step in the biosynthesis of archaeal membrane lipids. In Thermococcus sibiricus (strain DSM 12597 / MM 739), this protein is Geranylgeranylglyceryl phosphate synthase.